The primary structure comprises 136 residues: Transcription antitermination protein NusB (136 aa).

This sequence belongs to the NusB family.

In terms of biological role, involved in transcription antitermination. Required for transcription of ribosomal RNA (rRNA) genes. Binds specifically to the boxA antiterminator sequence of the ribosomal RNA (rrn) operons. The protein is Transcription antitermination protein NusB of Salinispora arenicola (strain CNS-205).